The following is a 158-amino-acid chain: NAD(P)H-quinone oxidoreductase subunit J, chloroplastic (158 aa).

It belongs to the complex I 30 kDa subunit family. NDH is composed of at least 16 different subunits, 5 of which are encoded in the nucleus.

The protein localises to the plastid. Its subcellular location is the chloroplast thylakoid membrane. The catalysed reaction is a plastoquinone + NADH + (n+1) H(+)(in) = a plastoquinol + NAD(+) + n H(+)(out). It carries out the reaction a plastoquinone + NADPH + (n+1) H(+)(in) = a plastoquinol + NADP(+) + n H(+)(out). Its function is as follows. NDH shuttles electrons from NAD(P)H:plastoquinone, via FMN and iron-sulfur (Fe-S) centers, to quinones in the photosynthetic chain and possibly in a chloroplast respiratory chain. The immediate electron acceptor for the enzyme in this species is believed to be plastoquinone. Couples the redox reaction to proton translocation, and thus conserves the redox energy in a proton gradient. In Cryptomeria japonica (Japanese cedar), this protein is NAD(P)H-quinone oxidoreductase subunit J, chloroplastic.